The primary structure comprises 637 residues: Threonine--tRNA ligase (637 aa).

A TGS domain is found at 1–61 (MLNITLPDGS…VEDSAVQIIT (61 aa)). The interval 242 to 533 (DHRKLGKQLD…LIENHAGSFP (292 aa)) is catalytic. Zn(2+) contacts are provided by cysteine 333, histidine 384, and histidine 510.

This sequence belongs to the class-II aminoacyl-tRNA synthetase family. As to quaternary structure, homodimer. It depends on Zn(2+) as a cofactor.

Its subcellular location is the cytoplasm. The catalysed reaction is tRNA(Thr) + L-threonine + ATP = L-threonyl-tRNA(Thr) + AMP + diphosphate + H(+). Catalyzes the attachment of threonine to tRNA(Thr) in a two-step reaction: L-threonine is first activated by ATP to form Thr-AMP and then transferred to the acceptor end of tRNA(Thr). Also edits incorrectly charged L-seryl-tRNA(Thr). The protein is Threonine--tRNA ligase of Neisseria meningitidis serogroup A / serotype 4A (strain DSM 15465 / Z2491).